The following is a 338-amino-acid chain: Ornithine carbamoyltransferase, catabolic (338 aa).

Carbamoyl phosphate is bound by residues 58–61 (STRT), Q85, R109, and 136–139 (HPTQ). L-ornithine contacts are provided by residues N168, D232, and 236–237 (SM). Carbamoyl phosphate-binding positions include 273 to 274 (CL) and R318.

This sequence belongs to the aspartate/ornithine carbamoyltransferase superfamily. OTCase family.

The protein resides in the cytoplasm. The enzyme catalyses carbamoyl phosphate + L-ornithine = L-citrulline + phosphate + H(+). It functions in the pathway amino-acid degradation; L-arginine degradation via ADI pathway; carbamoyl phosphate from L-arginine: step 2/2. Its function is as follows. Reversibly catalyzes the transfer of the carbamoyl group from carbamoyl phosphate (CP) to the N(epsilon) atom of ornithine (ORN) to produce L-citrulline. This chain is Ornithine carbamoyltransferase, catabolic, found in Streptococcus pneumoniae serotype 4 (strain ATCC BAA-334 / TIGR4).